The following is a 317-amino-acid chain: tRNA dimethylallyltransferase (317 aa).

ATP is bound at residue 14 to 21 (GPTAVGKT). Residue 16-21 (TAVGKT) coordinates substrate. The interaction with substrate tRNA stretch occupies residues 39–42 (DSMQ).

The protein belongs to the IPP transferase family. In terms of assembly, monomer. Mg(2+) is required as a cofactor.

It catalyses the reaction adenosine(37) in tRNA + dimethylallyl diphosphate = N(6)-dimethylallyladenosine(37) in tRNA + diphosphate. Its function is as follows. Catalyzes the transfer of a dimethylallyl group onto the adenine at position 37 in tRNAs that read codons beginning with uridine, leading to the formation of N6-(dimethylallyl)adenosine (i(6)A). The polypeptide is tRNA dimethylallyltransferase (Bacillus thuringiensis subsp. konkukian (strain 97-27)).